The following is a 248-amino-acid chain: Meiotic drive suppressor wtf1 (248 aa).

Positions leucine 30–aspartate 68 are disordered. A run of 4 helical transmembrane segments spans residues phenylalanine 73–cysteine 93, tryptophan 110–phenylalanine 130, isoleucine 152–threonine 172, and serine 186–valine 206.

It belongs to the WTF family. Homomer. Interacts with other proteins that exhibit high sequence similarity.

The protein resides in the spore membrane. It localises to the vacuole membrane. Functionally, acts as a suppressor component of the dual wtf meiotic drive system, and can suppress but not confer meiotic drive by compatible poisons. Wtf meiotic drive systems promote unequal transmission of alleles from the parental zygote to progeny spores by encoding a poison and an antidote from the same locus; the poison is trans-acting and forms toxic aggregates in all spores within an ascus, wherease the antidote is spore-specific and targets aggregates for degradation by the vacuole. Meiotic drive by wtf systems therefore lead to poisoning of all progeny that do not inherit the dual poison/antidote allele, or express a compatible antidote. In Schizosaccharomyces pombe (Fission yeast), this protein is Meiotic drive suppressor wtf1.